A 124-amino-acid polypeptide reads, in one-letter code: Small ribosomal subunit protein bS6 (124 aa).

It belongs to the bacterial ribosomal protein bS6 family.

Binds together with bS18 to 16S ribosomal RNA. This Haemophilus ducreyi (strain 35000HP / ATCC 700724) protein is Small ribosomal subunit protein bS6.